The following is a 494-amino-acid chain: Probable cytosol aminopeptidase (494 aa).

Mn(2+) contacts are provided by lysine 260 and aspartate 265. Lysine 272 is an active-site residue. Mn(2+) is bound by residues aspartate 283, aspartate 342, and glutamate 344. Arginine 346 is an active-site residue.

The protein belongs to the peptidase M17 family. Requires Mn(2+) as cofactor.

Its subcellular location is the cytoplasm. The enzyme catalyses Release of an N-terminal amino acid, Xaa-|-Yaa-, in which Xaa is preferably Leu, but may be other amino acids including Pro although not Arg or Lys, and Yaa may be Pro. Amino acid amides and methyl esters are also readily hydrolyzed, but rates on arylamides are exceedingly low.. The catalysed reaction is Release of an N-terminal amino acid, preferentially leucine, but not glutamic or aspartic acids.. Presumably involved in the processing and regular turnover of intracellular proteins. Catalyzes the removal of unsubstituted N-terminal amino acids from various peptides. This chain is Probable cytosol aminopeptidase, found in Bacillus cereus (strain Q1).